Reading from the N-terminus, the 284-residue chain is uncharacterized protein (284 aa).

The N-terminal stretch at Met-1–Ala-23 is a signal peptide.

The protein belongs to the surface antigen msp4 family.

This is an uncharacterized protein from Brucella suis biovar 1 (strain 1330).